Reading from the N-terminus, the 703-residue chain is Cyclic AMP-dependent transcription factor ATF-6 beta (703 aa).

Alanine 2 bears the N-acetylalanine mark. Positions 2–86 are transcription activation; sequence AELMLLSEIA…ELLPIFPDLQ (85 aa). Residues 2-396 lie on the Cytoplasmic side of the membrane; the sequence is AELMLLSEIA…ELKLGSGNRK (395 aa). Disordered regions lie at residues 87–114, 229–248, and 293–317; these read VKSE…PSSE, LDGS…QPKP, and EGPA…GNSC. Residues 89–114 are compositionally biased toward low complexity; that stretch reads SEPSSPCSSSSLSSESSRLSTEPSSE. The bZIP domain maps to 325-388; it reads LLKRQQRMIK…EALLAENSEL (64 aa). The interval 327-347 is basic motif; that stretch reads KRQQRMIKNRESACQSRRKKK. The interval 350-357 is leucine-zipper; the sequence is LQGLEARL. Residues 397–417 traverse the membrane as a helical; Signal-anchor for type II membrane protein segment; it reads VVCIMVFLLFIAFNFGPVSIS. Residues 418–703 are Lumenal-facing; it reads EPPSAPISPR…SHQPLYLNHP (286 aa). Residues 447-479 are disordered; that stretch reads PVQGVEPLQGSSQGPKEPQPSPTDQPSFSNLTA. Asparagine 476 and asparagine 505 each carry an N-linked (GlcNAc...) asparagine glycan. The segment at 521–565 is disordered; the sequence is QRHQRGRRKIPQRAQERQKSQPRKKSPPVKAVPIQPPGPPERDSV. Residues 522–531 are compositionally biased toward basic residues; sequence RHQRGRRKIP. N-linked (GlcNAc...) asparagine glycans are attached at residues asparagine 610, asparagine 627, and asparagine 676. Over residues 660–676 the composition is skewed to polar residues; that stretch reads STVPPSLRKQPSPTPGN. The disordered stretch occupies residues 660–703; it reads STVPPSLRKQPSPTPGNATGGPLPVSAASQAHQASHQPLYLNHP. A compositionally biased stretch (low complexity) spans 685–696; that stretch reads SAASQAHQASHQ.

The protein belongs to the bZIP family. ATF subfamily. Homodimer and heterodimer with ATF6-alpha. The dimer interacts with the nuclear transcription factor Y (NF-Y) trimer through direct binding to NF-Y subunit C (NF-YC). In terms of processing, N-glycosylated. During unfolded protein response, a fragment of approximately 60 kDa containing the cytoplasmic transcription factor domain is released by proteolysis. The cleavage is probably performed sequentially by site-1 (MBTPS1, S1P) and site-2 (MBTPS2, S2P) proteases. In terms of tissue distribution, ubiquitous.

Its subcellular location is the endoplasmic reticulum membrane. The protein resides in the nucleus. Its function is as follows. Precursor of the transcription factor form (Processed cyclic AMP-dependent transcription factor ATF-6 beta), which is embedded in the endoplasmic reticulum membrane. Endoplasmic reticulum stress promotes processing of this form, releasing the transcription factor form that translocates into the nucleus, where it activates transcription of genes involved in the unfolded protein response (UPR). Transcription factor that acts in the unfolded protein response (UPR) pathway by activating UPR target genes induced during ER stress. Binds DNA on the 5'-CCAC[GA]-3' half of the ER stress response element (ERSE) (5'-CCAATN(9)CCAC[GA]-3') when NF-Y is bound to ERSE. This chain is Cyclic AMP-dependent transcription factor ATF-6 beta (ATF6B), found in Homo sapiens (Human).